The chain runs to 163 residues: Cyclic pyranopterin monophosphate synthase (163 aa).

Substrate is bound by residues 75-77 and 113-114; these read LCH and ME. Asp-128 is a catalytic residue.

The protein belongs to the MoaC family. As to quaternary structure, homohexamer; trimer of dimers.

It carries out the reaction (8S)-3',8-cyclo-7,8-dihydroguanosine 5'-triphosphate = cyclic pyranopterin phosphate + diphosphate. It functions in the pathway cofactor biosynthesis; molybdopterin biosynthesis. In terms of biological role, catalyzes the conversion of (8S)-3',8-cyclo-7,8-dihydroguanosine 5'-triphosphate to cyclic pyranopterin monophosphate (cPMP). The protein is Cyclic pyranopterin monophosphate synthase of Magnetococcus marinus (strain ATCC BAA-1437 / JCM 17883 / MC-1).